The following is a 233-amino-acid chain: Putative cobalt transport protein CbiM (233 aa).

6 helical membrane-spanning segments follow: residues 9 to 29 (PPMW…YGIV), 43 to 63 (PLVA…MPSV), 75 to 95 (LGAV…VLLF), 107 to 127 (TLGA…VIVY), 138 to 158 (TVGI…TTAV), and 177 to 197 (IVIY…LTVI).

The protein belongs to the CbiM family. Forms an energy-coupling factor (ECF) transporter complex composed of an ATP-binding protein (A component, CbiO), a transmembrane protein (T component, CbiQ) and 2 possible substrate-capture proteins (S components, CbiM and CbiN) of unknown stoichimetry.

It is found in the cell membrane. It participates in cofactor biosynthesis; adenosylcobalamin biosynthesis. In terms of biological role, part of the energy-coupling factor (ECF) transporter complex CbiMNOQ involved in cobalt import. This Methanocaldococcus jannaschii (strain ATCC 43067 / DSM 2661 / JAL-1 / JCM 10045 / NBRC 100440) (Methanococcus jannaschii) protein is Putative cobalt transport protein CbiM.